The chain runs to 82 residues: Large ribosomal subunit protein uL23 (82 aa).

It belongs to the universal ribosomal protein uL23 family. In terms of assembly, part of the 50S ribosomal subunit. Contacts protein L29.

Functionally, binds to 23S rRNA. One of the proteins that surrounds the polypeptide exit tunnel on the outside of the ribosome. The protein is Large ribosomal subunit protein uL23 of Methanococcoides burtonii (strain DSM 6242 / NBRC 107633 / OCM 468 / ACE-M).